The chain runs to 206 residues: Thymidylate kinase (206 aa).

11–18 is a binding site for ATP; the sequence is GIDGAGKT.

The protein belongs to the thymidylate kinase family.

The catalysed reaction is dTMP + ATP = dTDP + ADP. Functionally, phosphorylation of dTMP to form dTDP in both de novo and salvage pathways of dTTP synthesis. This Paraburkholderia phytofirmans (strain DSM 17436 / LMG 22146 / PsJN) (Burkholderia phytofirmans) protein is Thymidylate kinase.